The following is a 372-amino-acid chain: Oxoglutarate-dependent flavonoid 7-O-demethylase 1 (372 aa).

Residues 221 to 321 (GIQALRMNYY…RLSVAAFLNP (101 aa)) enclose the Fe2OG dioxygenase domain. Fe cation is bound by residues His245, Asp247, and His302. Arg312 is a binding site for 2-oxoglutarate.

The protein belongs to the iron/ascorbate-dependent oxidoreductase family. As to quaternary structure, monomer. It depends on Fe(2+) as a cofactor. L-ascorbate is required as a cofactor. As to expression, accumulates in the trichomes of nevadensin-accumulating strains (e.g. cv. SD and cv. EMX-1) and in cv. SW (at protein level) but not in cv. MC.

Its subcellular location is the cytoplasm. It catalyses the reaction gardenin B + 2-oxoglutarate + O2 = nevadensin + formaldehyde + succinate + CO2 + H(+). It carries out the reaction 8-hydroxysalvigenin + 2-oxoglutarate + O2 = pilosin + formaldehyde + succinate + CO2. Its pathway is flavonoid metabolism. Its activity is regulated as follows. Inhibited by prohexadione-calcium, a 2-oxoglutarate-dependent dioxygenase (2-ODD) inhibitor, thus leading to a decreased abundance of nevadensin (NEV) and absence of pilosin (PIL) production, but to the accumulation of gardenin B (GARD B) and 8-hydroxysalvigenin (8-OH-SALV). In terms of biological role, oxoglutarate-dependent dioxygenase (2-ODD) acting as a flavonoid 7-O-demethylase involved in the biosynthesis of polymethoxylated flavonoids natural products such as nevadensin and salvigenin, aroma compounds which contribute to the flavor of sweet basil, and exhibit pharmacological activities such as anti-allergic, anti-oxidant, antibacterial, anti-proliferative, and anti-inflammatory effects. Catalyzes the 7-O-demethylation of methoxylated flavones; mediates the conversion of 8-hydroxysalvigenin (8-OH-SALV) to pilosin (PIL) and of gardenin B (GARD B) to nevadensin (NEV). The sequence is that of Oxoglutarate-dependent flavonoid 7-O-demethylase 1 from Ocimum basilicum (Sweet basil).